Consider the following 454-residue polypeptide: MNKCAIILAAGQGTRIKSKLPKVLHKACGKEMVNHVIDAMRNAEIDDVNVIIGKGAELVKERTTSRNVSYSLQAEQLGTGHAVKCAKDFLEGKTGVVAIFTGDAPLIKPETVKNLVDTHINEKNSATLLTSVIENPTGYGRIVRNGESVEKIVEHKDCNEQEIKIQEINAGMYCFDIESLLTSLEQLSNDNAQGEYYLTDVIEILKKENKKVGAMITDFEETLGVNSRAELAKVESIMRNRINRTHLDNGVTIIDPLNTYIEPEVVIGKDTIIYPGNVIEGKTVIGEDCVLYPNSRINNSTIGNGVEIQSSVILDSKIGDETTVGPFAYVRPESNIGEHVRIGDFVEIKKSTIGNNTKVSHLTYIGDAEVGERCNFGCGTVVVNYDGKKKHKTIIGDDSFIGCNTNLVSPVEVKDNTYIAAGSTITKEVPEGSLAIARAKQQNIEGWVERKKLK.

Residues 1-228 (MNKCAIILAA…FEETLGVNSR (228 aa)) form a pyrophosphorylase region. Residues 8–11 (LAAG), Lys22, Gln73, and 78–79 (GT) contribute to the UDP-N-acetyl-alpha-D-glucosamine site. Mg(2+) is bound at residue Asp103. Residues Gly140, Glu154, Asn169, and Asn226 each coordinate UDP-N-acetyl-alpha-D-glucosamine. Asn226 lines the Mg(2+) pocket. The segment at 229–249 (AELAKVESIMRNRINRTHLDN) is linker. Residues 250 to 454 (GVTIIDPLNT…EGWVERKKLK (205 aa)) are N-acetyltransferase. 2 residues coordinate UDP-N-acetyl-alpha-D-glucosamine: Arg331 and Lys349. His361 serves as the catalytic Proton acceptor. Residues Tyr364 and Asn375 each contribute to the UDP-N-acetyl-alpha-D-glucosamine site. Residues 384 to 385 (NY), Ala421, and Arg438 contribute to the acetyl-CoA site.

This sequence in the N-terminal section; belongs to the N-acetylglucosamine-1-phosphate uridyltransferase family. The protein in the C-terminal section; belongs to the transferase hexapeptide repeat family. In terms of assembly, homotrimer. Mg(2+) is required as a cofactor.

It is found in the cytoplasm. It carries out the reaction alpha-D-glucosamine 1-phosphate + acetyl-CoA = N-acetyl-alpha-D-glucosamine 1-phosphate + CoA + H(+). The catalysed reaction is N-acetyl-alpha-D-glucosamine 1-phosphate + UTP + H(+) = UDP-N-acetyl-alpha-D-glucosamine + diphosphate. It functions in the pathway nucleotide-sugar biosynthesis; UDP-N-acetyl-alpha-D-glucosamine biosynthesis; N-acetyl-alpha-D-glucosamine 1-phosphate from alpha-D-glucosamine 6-phosphate (route II): step 2/2. Its pathway is nucleotide-sugar biosynthesis; UDP-N-acetyl-alpha-D-glucosamine biosynthesis; UDP-N-acetyl-alpha-D-glucosamine from N-acetyl-alpha-D-glucosamine 1-phosphate: step 1/1. It participates in bacterial outer membrane biogenesis; LPS lipid A biosynthesis. Catalyzes the last two sequential reactions in the de novo biosynthetic pathway for UDP-N-acetylglucosamine (UDP-GlcNAc). The C-terminal domain catalyzes the transfer of acetyl group from acetyl coenzyme A to glucosamine-1-phosphate (GlcN-1-P) to produce N-acetylglucosamine-1-phosphate (GlcNAc-1-P), which is converted into UDP-GlcNAc by the transfer of uridine 5-monophosphate (from uridine 5-triphosphate), a reaction catalyzed by the N-terminal domain. This Clostridium perfringens (strain ATCC 13124 / DSM 756 / JCM 1290 / NCIMB 6125 / NCTC 8237 / Type A) protein is Bifunctional protein GlmU.